A 319-amino-acid polypeptide reads, in one-letter code: Ribosomal RNA small subunit methyltransferase H (319 aa).

Residues 39-41 (GGH), D59, F83, D104, and Q111 each bind S-adenosyl-L-methionine.

This sequence belongs to the methyltransferase superfamily. RsmH family.

It localises to the cytoplasm. The catalysed reaction is cytidine(1402) in 16S rRNA + S-adenosyl-L-methionine = N(4)-methylcytidine(1402) in 16S rRNA + S-adenosyl-L-homocysteine + H(+). In terms of biological role, specifically methylates the N4 position of cytidine in position 1402 (C1402) of 16S rRNA. The chain is Ribosomal RNA small subunit methyltransferase H from Ralstonia nicotianae (strain ATCC BAA-1114 / GMI1000) (Ralstonia solanacearum).